The following is a 115-amino-acid chain: Basic leucine zipper transcriptional factor ATF-like (115 aa).

The segment at 1–60 (MQQESDRNEQGYSSSPPSSNKQDSSDDTKKNHRREKNRIAAQKSRQRQTEKADSLHIESE) is disordered. A compositionally biased stretch (low complexity) spans 13 to 22 (SSSPPSSNKQ). The region spanning 27 to 90 (DTKKNHRREK…KYLTCVLSTH (64 aa)) is the bZIP domain. Residues 29 to 51 (KKNHRREKNRIAAQKSRQRQTEK) are basic motif. Over residues 47 to 60 (RQTEKADSLHIESE) the composition is skewed to basic and acidic residues. The leucine-zipper stretch occupies residues 55–83 (LHIESENLERLNSALRGEISGLREELKYL).

This sequence belongs to the bZIP family.

The protein resides in the nucleus. It is found in the cytoplasm. Its function is as follows. AP-1 family transcription factor that controls the differentiation of lineage-specific cells in the immune system: specifically mediates the differentiation of T-helper 17 cells (Th17), follicular T-helper cells (TfH), CD8(+) dendritic cells and class-switch recombination (CSR) in B-cells. The protein is Basic leucine zipper transcriptional factor ATF-like (batf) of Xenopus laevis (African clawed frog).